A 266-amino-acid polypeptide reads, in one-letter code: tRNA (guanine-N(7)-)-methyltransferase (266 aa).

Residues 1–32 (MSDHGRMHIPESGLATPAAAHSDDPPHPHFNR) form a disordered region. S-adenosyl-L-methionine is bound by residues E96, E121, D148, and D171. The active site involves D171. Substrate-binding residues include K175 and D207.

Belongs to the class I-like SAM-binding methyltransferase superfamily. TrmB family.

The catalysed reaction is guanosine(46) in tRNA + S-adenosyl-L-methionine = N(7)-methylguanosine(46) in tRNA + S-adenosyl-L-homocysteine. It functions in the pathway tRNA modification; N(7)-methylguanine-tRNA biosynthesis. Catalyzes the formation of N(7)-methylguanine at position 46 (m7G46) in tRNA. This Mycolicibacterium vanbaalenii (strain DSM 7251 / JCM 13017 / BCRC 16820 / KCTC 9966 / NRRL B-24157 / PYR-1) (Mycobacterium vanbaalenii) protein is tRNA (guanine-N(7)-)-methyltransferase.